Here is a 339-residue protein sequence, read N- to C-terminus: Anthranilate phosphoribosyltransferase (339 aa).

5-phospho-alpha-D-ribose 1-diphosphate contacts are provided by residues Gly-80, 83 to 84 (GD), Thr-88, 90 to 93 (NIST), 108 to 116 (KHGNRAMSS), and Ser-120. Residue Gly-80 coordinates anthranilate. Residue Ser-92 participates in Mg(2+) binding. Anthranilate is bound at residue Asn-111. An anthranilate-binding site is contributed by Arg-166. Positions 225 and 226 each coordinate Mg(2+).

Belongs to the anthranilate phosphoribosyltransferase family. As to quaternary structure, homodimer. Mg(2+) is required as a cofactor.

It carries out the reaction N-(5-phospho-beta-D-ribosyl)anthranilate + diphosphate = 5-phospho-alpha-D-ribose 1-diphosphate + anthranilate. The protein operates within amino-acid biosynthesis; L-tryptophan biosynthesis; L-tryptophan from chorismate: step 2/5. Its function is as follows. Catalyzes the transfer of the phosphoribosyl group of 5-phosphorylribose-1-pyrophosphate (PRPP) to anthranilate to yield N-(5'-phosphoribosyl)-anthranilate (PRA). The sequence is that of Anthranilate phosphoribosyltransferase from Chloroflexus aurantiacus (strain ATCC 29366 / DSM 635 / J-10-fl).